Reading from the N-terminus, the 632-residue chain is tRNA uridine 5-carboxymethylaminomethyl modification enzyme MnmG (632 aa).

Residues G13 to G18, V125, and S180 each bind FAD. Residue G273–F287 coordinates NAD(+). Q370 is a binding site for FAD.

Belongs to the MnmG family. Homodimer. Heterotetramer of two MnmE and two MnmG subunits. FAD serves as cofactor.

It localises to the cytoplasm. Its function is as follows. NAD-binding protein involved in the addition of a carboxymethylaminomethyl (cmnm) group at the wobble position (U34) of certain tRNAs, forming tRNA-cmnm(5)s(2)U34. This is tRNA uridine 5-carboxymethylaminomethyl modification enzyme MnmG from Vibrio vulnificus (strain YJ016).